Consider the following 311-residue polypeptide: Probable manganese-dependent inorganic pyrophosphatase (311 aa).

H9, D13, D15, D77, H99, and D151 together coordinate Mn(2+).

This sequence belongs to the PPase class C family. Mn(2+) is required as a cofactor.

Its subcellular location is the cytoplasm. It catalyses the reaction diphosphate + H2O = 2 phosphate + H(+). This Streptococcus equi subsp. equi (strain 4047) protein is Probable manganese-dependent inorganic pyrophosphatase.